Reading from the N-terminus, the 483-residue chain is Zinc metalloproteinase/disintegrin VMP-II (483 aa).

An N-terminal signal peptide occupies residues 1 to 20 (MIQVLLVTLCLAAFPYQGNS). A propeptide spanning residues 21–191 (IILESGNVND…KASQLNLTPE (171 aa)) is cleaved from the precursor. A Peptidase M12B domain is found at 198–394 (RYIELVVVAD…HNPQCMLNEP (197 aa)). The Ca(2+) site is built by Glu201 and Asp285. Cystine bridges form between Cys309/Cys389, Cys349/Cys373, and Cys351/Cys356. His334 provides a ligand contact to Zn(2+). Residue Glu335 is part of the active site. Residues His338 and His344 each contribute to the Zn(2+) site. Cys389 and Asn392 together coordinate Ca(2+). Residues 395 to 414 (LRTDIVSTPVSGNELWETGE) constitute a propeptide that is removed on maturation. Residues 402–483 (TPVSGNELWE…AGCPRNPFHA (82 aa)) enclose the Disintegrin domain. 4 disulfides stabilise this stretch: Cys425/Cys448, Cys439/Cys445, Cys444/Cys469, and Cys457/Cys476. The short motif at 461–463 (KGD) is the Cell attachment site; atypical (KGD) element.

It belongs to the venom metalloproteinase (M12B) family. P-II subfamily. P-IIe sub-subfamily. Heterodimer; disulfide-linked (disintegrin). The cofactor is Zn(2+). Expressed by the venom gland.

The protein resides in the secreted. Its activity is regulated as follows. Inhibited by EDTA and 1,10-phenanthroline, but not by PMSF. Functionally, has fibrinolytic activity. The recombinant enzyme cleaves both alpha- (FGA) and beta-chains (FGB) of fibrinogen, but not the gamma-chain. The recombinant protein does not produce hemorrhage in mice and does not have effect on ADP- or collagen-stimulated platelet aggregation. Inhibits platelet aggregation induced by ADP, thrombin, platelet-activating factor and collagen. Acts by inhibiting fibrinogen interaction with platelet receptors GPIIb/GPIIIa (ITGA2B/ITGB3). This Agkistrodon piscivorus leucostoma (Western cottonmouth) protein is Zinc metalloproteinase/disintegrin VMP-II.